A 189-amino-acid chain; its full sequence is Peptidyl-tRNA hydrolase (189 aa).

Tyr15 serves as a coordination point for tRNA. His20 serves as the catalytic Proton acceptor. 3 residues coordinate tRNA: Phe66, Asn68, and Asn114.

This sequence belongs to the PTH family. Monomer.

It is found in the cytoplasm. It carries out the reaction an N-acyl-L-alpha-aminoacyl-tRNA + H2O = an N-acyl-L-amino acid + a tRNA + H(+). In terms of biological role, hydrolyzes ribosome-free peptidyl-tRNAs (with 1 or more amino acids incorporated), which drop off the ribosome during protein synthesis, or as a result of ribosome stalling. Its function is as follows. Catalyzes the release of premature peptidyl moieties from peptidyl-tRNA molecules trapped in stalled 50S ribosomal subunits, and thus maintains levels of free tRNAs and 50S ribosomes. The chain is Peptidyl-tRNA hydrolase from Streptococcus thermophilus (strain CNRZ 1066).